A 336-amino-acid polypeptide reads, in one-letter code: Ketol-acid reductoisomerase (NADP(+)) (336 aa).

The KARI N-terminal Rossmann domain maps to 2 to 181 (AKVYYEKDVM…GATRAGVLET (180 aa)). NADP(+) contacts are provided by residues 25–28 (YGSQ), Arg-48, Ser-52, and 82–85 (DELQ). His-107 is an active-site residue. Residue Gly-133 coordinates NADP(+). Residues 182-327 (TFKEETETDL…RQLREMMPFV (146 aa)) enclose the KARI C-terminal knotted domain. 4 residues coordinate Mg(2+): Asp-190, Glu-194, Glu-226, and Glu-230. Ser-251 lines the substrate pocket.

This sequence belongs to the ketol-acid reductoisomerase family. Requires Mg(2+) as cofactor.

It catalyses the reaction (2R)-2,3-dihydroxy-3-methylbutanoate + NADP(+) = (2S)-2-acetolactate + NADPH + H(+). It carries out the reaction (2R,3R)-2,3-dihydroxy-3-methylpentanoate + NADP(+) = (S)-2-ethyl-2-hydroxy-3-oxobutanoate + NADPH + H(+). It participates in amino-acid biosynthesis; L-isoleucine biosynthesis; L-isoleucine from 2-oxobutanoate: step 2/4. Its pathway is amino-acid biosynthesis; L-valine biosynthesis; L-valine from pyruvate: step 2/4. Functionally, involved in the biosynthesis of branched-chain amino acids (BCAA). Catalyzes an alkyl-migration followed by a ketol-acid reduction of (S)-2-acetolactate (S2AL) to yield (R)-2,3-dihydroxy-isovalerate. In the isomerase reaction, S2AL is rearranged via a Mg-dependent methyl migration to produce 3-hydroxy-3-methyl-2-ketobutyrate (HMKB). In the reductase reaction, this 2-ketoacid undergoes a metal-dependent reduction by NADPH to yield (R)-2,3-dihydroxy-isovalerate. The protein is Ketol-acid reductoisomerase (NADP(+)) of Bacillus cytotoxicus (strain DSM 22905 / CIP 110041 / 391-98 / NVH 391-98).